Here is a 48-residue protein sequence, read N- to C-terminus: uncharacterized protein (48 aa).

The disordered stretch occupies residues 1-48; sequence MVREKKNPSSAAVSAASVKGDAGPTQHYGGGKRTSQNQQYKKHNMGQS. The segment covering 9–18 has biased composition (low complexity); that stretch reads SSAAVSAASV.

This is an uncharacterized protein from Bacillus subtilis (strain 168).